A 519-amino-acid chain; its full sequence is ATP synthase subunit alpha (519 aa).

ATP is bound at residue 174–181; the sequence is GDRQTGKT.

Belongs to the ATPase alpha/beta chains family. In terms of assembly, F-type ATPases have 2 components, CF(1) - the catalytic core - and CF(0) - the membrane proton channel. CF(1) has five subunits: alpha(3), beta(3), gamma(1), delta(1), epsilon(1). CF(0) has three main subunits: a(1), b(2) and c(9-12). The alpha and beta chains form an alternating ring which encloses part of the gamma chain. CF(1) is attached to CF(0) by a central stalk formed by the gamma and epsilon chains, while a peripheral stalk is formed by the delta and b chains.

The protein resides in the cell inner membrane. It carries out the reaction ATP + H2O + 4 H(+)(in) = ADP + phosphate + 5 H(+)(out). Its function is as follows. Produces ATP from ADP in the presence of a proton gradient across the membrane. The alpha chain is a regulatory subunit. The protein is ATP synthase subunit alpha of Paracidovorax citrulli (strain AAC00-1) (Acidovorax citrulli).